The sequence spans 207 residues: ATP-dependent Clp protease proteolytic subunit 1 (207 aa).

Ser103 (nucleophile) is an active-site residue. His128 is a catalytic residue.

Belongs to the peptidase S14 family. Fourteen ClpP subunits assemble into 2 heptameric rings which stack back to back to give a disk-like structure with a central cavity, resembling the structure of eukaryotic proteasomes.

It is found in the cytoplasm. It carries out the reaction Hydrolysis of proteins to small peptides in the presence of ATP and magnesium. alpha-casein is the usual test substrate. In the absence of ATP, only oligopeptides shorter than five residues are hydrolyzed (such as succinyl-Leu-Tyr-|-NHMec, and Leu-Tyr-Leu-|-Tyr-Trp, in which cleavage of the -Tyr-|-Leu- and -Tyr-|-Trp bonds also occurs).. Its function is as follows. Cleaves peptides in various proteins in a process that requires ATP hydrolysis. Has a chymotrypsin-like activity. Plays a major role in the degradation of misfolded proteins. This chain is ATP-dependent Clp protease proteolytic subunit 1, found in Tropheryma whipplei (strain Twist) (Whipple's bacillus).